Consider the following 89-residue polypeptide: Small ribosomal subunit protein bS16 (89 aa).

The protein belongs to the bacterial ribosomal protein bS16 family.

This is Small ribosomal subunit protein bS16 from Chloroflexus aurantiacus (strain ATCC 29364 / DSM 637 / Y-400-fl).